The chain runs to 164 residues: Pheromone-binding protein (164 aa).

The first 22 residues, 1-22 (MSIQGQIALALMVNMAVGSVDA), serve as a signal peptide directing secretion. Cystine bridges form between C41–C76, C72–C130, and C119–C139.

Belongs to the PBP/GOBP family. As to quaternary structure, homodimer. In terms of tissue distribution, antenna.

Functionally, this major soluble protein in olfactory sensilla of male moths serves to solubilize the extremely hydrophobic pheromone molecules such as bombykol and to transport pheromone through the aqueous lymph to receptors located on olfactory cilia. The protein is Pheromone-binding protein of Bombyx mori (Silk moth).